We begin with the raw amino-acid sequence, 172 residues long: C-phycocyanin beta subunit (172 aa).

Asparagine 72 carries the post-translational modification N4-methylasparagine. Residues cysteine 82 and cysteine 153 each coordinate (2R,3E)-phycocyanobilin.

Belongs to the phycobiliprotein family. As to quaternary structure, the alpha and beta subunits exhibit high affinity for one another and form heterodimers. These heterodimers form heterohexamers of 3 alpha and 3 beta subunits which, in turn, aggregate into a heterododecamer consisting of 2 heterohexamers. In terms of processing, contains two covalently linked bilin chromophores.

It localises to the cellular thylakoid membrane. Light-harvesting photosynthetic bile pigment-protein from the phycobiliprotein complex (phycobilisome, PBS). Phycocyanin is the major phycobiliprotein in the PBS rod. This Arthrospira platensis (Spirulina platensis) protein is C-phycocyanin beta subunit (cpcB).